The following is a 493-amino-acid chain: Ribulose bisphosphate carboxylase large chain (493 aa).

Substrate is bound at residue asparagine 132. The residue at position 181 (cysteine 181) is an S-nitrosocysteine. Substrate is bound at residue threonine 182. Lysine 184 acts as the Proton acceptor in catalysis. Lysine 186 contributes to the substrate binding site. Mg(2+)-binding residues include lysine 210, aspartate 212, and glutamate 213. The residue at position 210 (lysine 210) is an N6-carboxylysine. The active-site Proton acceptor is the histidine 302. Residues arginine 303, histidine 335, and serine 387 each contribute to the substrate site. An S-nitrosocysteine modification is found at cysteine 460.

The protein belongs to the RuBisCO large chain family. Type I subfamily. As to quaternary structure, heterohexadecamer of 8 large chains and 8 small chains. The cofactor is Mg(2+).

It localises to the plastid. Its subcellular location is the chloroplast. It catalyses the reaction 2 (2R)-3-phosphoglycerate + 2 H(+) = D-ribulose 1,5-bisphosphate + CO2 + H2O. The enzyme catalyses D-ribulose 1,5-bisphosphate + O2 = 2-phosphoglycolate + (2R)-3-phosphoglycerate + 2 H(+). RuBisCO catalyzes two reactions: the carboxylation of D-ribulose 1,5-bisphosphate, the primary event in carbon dioxide fixation, as well as the oxidative fragmentation of the pentose substrate in the photorespiration process. Both reactions occur simultaneously and in competition at the same active site. Carbon dioxide and oxygen bind in the same pocket of the enzyme in a similar manner. The chain is Ribulose bisphosphate carboxylase large chain from Galdieria sulphuraria (Red alga).